The sequence spans 361 residues: Alanine racemase (361 aa).

Residue Lys35 is the Proton acceptor; specific for D-alanine of the active site. Lys35 carries the post-translational modification N6-(pyridoxal phosphate)lysine. Arg130 is a substrate binding site. Tyr257 functions as the Proton acceptor; specific for L-alanine in the catalytic mechanism. A substrate-binding site is contributed by Met305.

Belongs to the alanine racemase family. Requires pyridoxal 5'-phosphate as cofactor.

The enzyme catalyses L-alanine = D-alanine. The protein operates within amino-acid biosynthesis; D-alanine biosynthesis; D-alanine from L-alanine: step 1/1. Functionally, catalyzes the interconversion of L-alanine and D-alanine. May also act on other amino acids. This Nitrosomonas eutropha (strain DSM 101675 / C91 / Nm57) protein is Alanine racemase (alr).